We begin with the raw amino-acid sequence, 182 residues long: Heat shock protein beta-2 (182 aa).

Residues 55 to 163 (RAGEGARAGA…DTEVNEVYIS (109 aa)) enclose the sHSP domain.

This sequence belongs to the small heat shock protein (HSP20) family. Interacts with DMPK; may enhance its kinase activity.

It localises to the cytoplasm. It is found in the nucleus. Its function is as follows. May regulate the kinase DMPK. The chain is Heat shock protein beta-2 (Hspb2) from Mus musculus (Mouse).